An 81-amino-acid chain; its full sequence is Large ribosomal subunit protein bL31B (81 aa).

Belongs to the bacterial ribosomal protein bL31 family. Type B subfamily. In terms of assembly, part of the 50S ribosomal subunit.

In Limosilactobacillus reuteri (strain DSM 20016) (Lactobacillus reuteri), this protein is Large ribosomal subunit protein bL31B.